The primary structure comprises 815 residues: Echinoderm microtubule-associated protein-like 1 (815 aa).

Residues 31-72 (SMEVTDRIASLEQRVQMQEDDIQLLKSALADVVRRLNITEEQ) are a coiled coil. Residues 77–179 (NRKGPTKARP…NSESKPKEPV (103 aa)) are disordered. Residues 92–101 (PLRTTVNNGT) show a composition bias toward polar residues. Position 113 is a phosphoserine (Ser113). Residues 126-138 (TKSNIKRTSSSER) show a composition bias toward polar residues. Positions 143–153 (GRRESNGDSRG) are enriched in basic and acidic residues. Residues 156–168 (NRTGSTSSSSSGK) show a composition bias toward low complexity. The segment at 176–815 (KEPVFSAEEG…DTSIMQWRVI (640 aa)) is tandem atypical propeller in EMLs. WD repeat units follow at residues 261 to 310 (EQLQ…IWDS), 315 to 358 (TLHV…VWDW), 363 to 400 (KLAD…FWTL), 409 to 446 (QGLF…VWGK), 450 to 489 (RISY…SWSG), 493 to 530 (KLRK…LQGT), 535 to 572 (FTPI…LWDA), 578 to 613 (VWDK…VFDT), 617 to 655 (DLVT…IYGV), 664 to 701 (RVGK…YWVP), 709 to 768 (SVET…LFSY), and 775 to 814 (APSH…QWRV).

The protein belongs to the WD repeat EMAP family. Homotrimer; self-association is mediated by the N-terminal coiled coil. Does not interact with EML3. Binds repolymerizing microtubules. Binds unpolymerized tubulins via its WD repeat region. Interacts with TASOR. As to expression, ubiquitous; expressed in most tissues with the exception of thymus and peripheral blood lymphocytes.

It is found in the cytoplasm. The protein resides in the perinuclear region. Its subcellular location is the cytoskeleton. In terms of biological role, modulates the assembly and organization of the microtubule cytoskeleton, and probably plays a role in regulating the orientation of the mitotic spindle and the orientation of the plane of cell division. Required for normal proliferation of neuronal progenitor cells in the developing brain and for normal brain development. Does not affect neuron migration per se. This chain is Echinoderm microtubule-associated protein-like 1 (EML1), found in Homo sapiens (Human).